The sequence spans 258 residues: uncharacterized protein (258 aa).

36–43 provides a ligand contact to ATP; the sequence is GKAGTGKS.

The protein belongs to the IIV-6 075L family.

This is an uncharacterized protein from Acheta domesticus (House cricket).